The primary structure comprises 140 residues: CBS domain-containing protein YhcV (140 aa).

CBS domains lie at Met-8–Gly-64 and Met-72–Ala-127.

The sequence is that of CBS domain-containing protein YhcV (yhcV) from Bacillus subtilis (strain 168).